Consider the following 203-residue polypeptide: MINEYVARKVALKDMQPCAICSKPSTTVLYNASGPDWLYTCEIHLQDNPQFVIPLYSTEYNEAVAQLKLVKGKMDSLTSAQTQLGSWDGWVTKIFSKKEKETNNSKDPDPTTTDSTDTSPQAKNDAEILSETKKQYSKILDKVTELQRKNRKYELAKIMFESRLLRKRTEQVNRERYLKEQENYSNTDPEELLRKHVFPSVPK.

Positions 99–109 (EKETNNSKDPD) are enriched in basic and acidic residues. Disordered stretches follow at residues 99 to 125 (EKET…AKND) and 171 to 193 (QVNR…EELL). Over residues 110-120 (PTTTDSTDTSP) the composition is skewed to low complexity. The stretch at 121–157 (QAKNDAEILSETKKQYSKILDKVTELQRKNRKYELAK) forms a coiled coil. Residues 171 to 182 (QVNRERYLKEQE) show a composition bias toward basic and acidic residues.

In terms of assembly, interacts with VPS4.

It localises to the cytoplasm. It is found in the endosome. VPS4-associated protein involved in trafficking to the vacuole. The chain is VPS4-associated protein 1 (VFA1) from Saccharomyces cerevisiae (strain ATCC 204508 / S288c) (Baker's yeast).